The following is a 457-amino-acid chain: Adenylosuccinate synthetase isozyme 2 B (457 aa).

GTP contacts are provided by residues Gly40–Lys46 and Gly68–Thr70. Asp41 acts as the Proton acceptor in catalysis. Positions 41 and 68 each coordinate Mg(2+). Substrate is bound at residue Asp41. Residues Asp41–Lys44, Asn66–His69, Thr163, Arg177, Asn256, Thr271, and Arg335 each bind IMP. Catalysis depends on His69, which acts as the Proton donor. Residue Val331–Arg337 participates in substrate binding. GTP contacts are provided by residues Arg337, Lys363 to Asp365, and Gly445 to Lys448.

The protein belongs to the adenylosuccinate synthetase family. As to quaternary structure, homodimer. Requires Mg(2+) as cofactor.

The protein localises to the cytoplasm. Its subcellular location is the mitochondrion. It catalyses the reaction IMP + L-aspartate + GTP = N(6)-(1,2-dicarboxyethyl)-AMP + GDP + phosphate + 2 H(+). It participates in purine metabolism; AMP biosynthesis via de novo pathway; AMP from IMP: step 1/2. With respect to regulation, inhibited competitively by AMP and IMP and non-competitively by fructose 1,6-bisphosphate. Its function is as follows. Plays an important role in the de novo pathway and in the salvage pathway of purine nucleotide biosynthesis. Catalyzes the first committed step in the biosynthesis of AMP from IMP. The sequence is that of Adenylosuccinate synthetase isozyme 2 B (adss2-b) from Xenopus tropicalis (Western clawed frog).